Here is a 240-residue protein sequence, read N- to C-terminus: Ribonuclease PH (240 aa).

Phosphate is bound by residues R87 and 125 to 127 (GTR).

Belongs to the RNase PH family. Homohexameric ring arranged as a trimer of dimers.

It carries out the reaction tRNA(n+1) + phosphate = tRNA(n) + a ribonucleoside 5'-diphosphate. Phosphorolytic 3'-5' exoribonuclease that plays an important role in tRNA 3'-end maturation. Removes nucleotide residues following the 3'-CCA terminus of tRNAs; can also add nucleotides to the ends of RNA molecules by using nucleoside diphosphates as substrates, but this may not be physiologically important. Probably plays a role in initiation of 16S rRNA degradation (leading to ribosome degradation) during starvation. This is Ribonuclease PH from Pseudomonas fluorescens (strain SBW25).